The following is a 50-amino-acid chain: Large ribosomal subunit protein bL33B (50 aa).

This sequence belongs to the bacterial ribosomal protein bL33 family.

The protein is Large ribosomal subunit protein bL33B of Streptococcus pyogenes serotype M1.